The chain runs to 225 residues: Orotate phosphoribosyltransferase (225 aa).

Lys-31 contributes to the 5-phospho-alpha-D-ribose 1-diphosphate binding site. Residue 39-40 (FF) participates in orotate binding. 5-phospho-alpha-D-ribose 1-diphosphate contacts are provided by residues 78–79 (YK), Arg-105, Lys-106, Lys-109, His-111, and 130–138 (DDVLTSGKA). Residues Thr-134 and Arg-163 each contribute to the orotate site.

Belongs to the purine/pyrimidine phosphoribosyltransferase family. PyrE subfamily. As to quaternary structure, homodimer.

It carries out the reaction orotidine 5'-phosphate + diphosphate = orotate + 5-phospho-alpha-D-ribose 1-diphosphate. It participates in pyrimidine metabolism; UMP biosynthesis via de novo pathway; UMP from orotate: step 1/2. Functionally, catalyzes the transfer of a ribosyl phosphate group from 5-phosphoribose 1-diphosphate to orotate, leading to the formation of orotidine monophosphate (OMP). The protein is Orotate phosphoribosyltransferase (URA5) of Cryptococcus neoformans var. grubii serotype A (strain H99 / ATCC 208821 / CBS 10515 / FGSC 9487) (Filobasidiella neoformans var. grubii).